The chain runs to 95 residues: Co-chaperonin GroES (95 aa).

It belongs to the GroES chaperonin family. As to quaternary structure, heptamer of 7 subunits arranged in a ring. Interacts with the chaperonin GroEL.

It localises to the cytoplasm. Its function is as follows. Together with the chaperonin GroEL, plays an essential role in assisting protein folding. The GroEL-GroES system forms a nano-cage that allows encapsulation of the non-native substrate proteins and provides a physical environment optimized to promote and accelerate protein folding. GroES binds to the apical surface of the GroEL ring, thereby capping the opening of the GroEL channel. This Pseudoalteromonas translucida (strain TAC 125) protein is Co-chaperonin GroES.